Reading from the N-terminus, the 194-residue chain is uncharacterized protein (194 aa).

Residues 77–92 (QTQPQHQTLSQHLPQT) are compositionally biased toward polar residues. The interval 77 to 96 (QTQPQHQTLSQHLPQTHHTD) is disordered. A helical membrane pass occupies residues 169-189 (FWEILLLIILIAVLVYGIYWL).

The protein resides in the host membrane. It localises to the virion. This is an uncharacterized protein from Acanthamoeba polyphaga (Amoeba).